The sequence spans 330 residues: Ketol-acid reductoisomerase (NADP(+)) (330 aa).

One can recognise a KARI N-terminal Rossmann domain in the interval 1–181 (MKMYYESDVN…GFTKAGVIET (181 aa)). Residues 24–27 (YGSQ), arginine 47, serine 52, and 82–85 (DEIQ) contribute to the NADP(+) site. Residue histidine 107 is part of the active site. Glycine 133 is a binding site for NADP(+). In terms of domain architecture, KARI C-terminal knotted spans 182 to 327 (TFKEETETDL…ERLRKACGLQ (146 aa)). Residues aspartate 190, glutamate 194, glutamate 226, and glutamate 230 each contribute to the Mg(2+) site. Serine 251 lines the substrate pocket.

Belongs to the ketol-acid reductoisomerase family. It depends on Mg(2+) as a cofactor.

The enzyme catalyses (2R)-2,3-dihydroxy-3-methylbutanoate + NADP(+) = (2S)-2-acetolactate + NADPH + H(+). It catalyses the reaction (2R,3R)-2,3-dihydroxy-3-methylpentanoate + NADP(+) = (S)-2-ethyl-2-hydroxy-3-oxobutanoate + NADPH + H(+). It functions in the pathway amino-acid biosynthesis; L-isoleucine biosynthesis; L-isoleucine from 2-oxobutanoate: step 2/4. Its pathway is amino-acid biosynthesis; L-valine biosynthesis; L-valine from pyruvate: step 2/4. Involved in the biosynthesis of branched-chain amino acids (BCAA). Catalyzes an alkyl-migration followed by a ketol-acid reduction of (S)-2-acetolactate (S2AL) to yield (R)-2,3-dihydroxy-isovalerate. In the isomerase reaction, S2AL is rearranged via a Mg-dependent methyl migration to produce 3-hydroxy-3-methyl-2-ketobutyrate (HMKB). In the reductase reaction, this 2-ketoacid undergoes a metal-dependent reduction by NADPH to yield (R)-2,3-dihydroxy-isovalerate. The protein is Ketol-acid reductoisomerase (NADP(+)) of Methanobrevibacter smithii (strain ATCC 35061 / DSM 861 / OCM 144 / PS).